The sequence spans 559 residues: MSSEQSAPGASPRAPRPGTQKSSGAVTKKGERAAKEKPATVLPPVGEEEPKSPEEYQCSGVLETDFAELCTRWGYTDFPKVVNRPRPHPPFVPSASLSEKATLDDPRLSGSCSLNSLESKYVFFRPTIQVELEQEDSKSVKEIYIRGWKVEERILGVFSKCLPPLTQLQAINLWKVGLTDKTLTTFIELLPLCSSTLRKVSLEGNPLPEQSYHKLMALDSTIAHLSLRNNNIDDRGAQLLGQALSTLHSCNRTLVSLNLGFNHIGDEGAGYIADGLRLNRSLLWLSLAHNRIQDKGALKLAEVLRAFELTHTEVVERRRLLLEKGTQERSRSPSSSRHGDSKTDREKSQMVGISNSALVDKTDKTQTMKTPKGLGKKKEKSWELAKKEEKLGSGQSPTQGTPKKEDATKAGKGKVTIPEQKPSRAKGIKIGSREKRSILLESELVVEATEVVNPLLEPVEHRDGKVFMPGNKVLLHLNLIRNRITEVGLEGFLATVQYQMQFSKAKSASKGPVGLLWLSLAKNCFAPQCPAYAIIQELMLPRDPIKAKLREDEAMAFFP.

Low complexity predominate over residues 1–18 (MSSEQSAPGASPRAPRPG). Residues 1–56 (MSSEQSAPGASPRAPRPGTQKSSGAVTKKGERAAKEKPATVLPPVGEEEPKSPEEY) form a disordered region. The segment covering 28 to 38 (KKGERAAKEKP) has biased composition (basic and acidic residues). LRR repeat units follow at residues 172 to 193 (NLWKVGLTDKTLTTFIELLPLC), 196 to 216 (TLRKVSLEGNPLPEQSYHKLM), 221 to 241 (TIAHLSLRNNNIDDRGAQLLG), 253 to 266 (TLVSLNLGFNHIGD), and 281 to 302 (SLLWLSLAHNRIQDKGALKLAE). Basic and acidic residues-rich tracts occupy residues 324 to 348 (KGTQERSRSPSSSRHGDSKTDREKS) and 380 to 391 (KSWELAKKEEKL). Positions 324 to 427 (KGTQERSRSP…PEQKPSRAKG (104 aa)) are disordered.

In Homo sapiens (Human), this protein is Leucine-rich repeat-containing protein 71 (LRRC71).